The sequence spans 386 residues: O-phospho-L-seryl-tRNA:Cys-tRNA synthase (386 aa).

Residues 89 to 90 (AR), Asn196, and 219 to 221 (SGH) each bind pyridoxal 5'-phosphate. Lys222 is subject to N6-(pyridoxal phosphate)lysine.

The protein belongs to the SepCysS family. As to quaternary structure, homodimer. Interacts with SepRS. The cofactor is pyridoxal 5'-phosphate.

It carries out the reaction O-phospho-L-seryl-tRNA(Cys) + hydrogen sulfide + H(+) = L-cysteinyl-tRNA(Cys) + phosphate. Its function is as follows. Converts O-phospho-L-seryl-tRNA(Cys) (Sep-tRNA(Cys)) to L-cysteinyl-tRNA(Cys) (Cys-tRNA(Cys)). This Methanosarcina mazei (strain ATCC BAA-159 / DSM 3647 / Goe1 / Go1 / JCM 11833 / OCM 88) (Methanosarcina frisia) protein is O-phospho-L-seryl-tRNA:Cys-tRNA synthase.